A 192-amino-acid chain; its full sequence is ATP-dependent Clp protease proteolytic subunit 1 (192 aa).

Catalysis depends on Ser92, which acts as the Nucleophile. His117 is an active-site residue.

It belongs to the peptidase S14 family. As to quaternary structure, fourteen ClpP subunits assemble into 2 heptameric rings which stack back to back to give a disk-like structure with a central cavity, resembling the structure of eukaryotic proteasomes.

The protein resides in the cytoplasm. The enzyme catalyses Hydrolysis of proteins to small peptides in the presence of ATP and magnesium. alpha-casein is the usual test substrate. In the absence of ATP, only oligopeptides shorter than five residues are hydrolyzed (such as succinyl-Leu-Tyr-|-NHMec, and Leu-Tyr-Leu-|-Tyr-Trp, in which cleavage of the -Tyr-|-Leu- and -Tyr-|-Trp bonds also occurs).. Functionally, cleaves peptides in various proteins in a process that requires ATP hydrolysis. Has a chymotrypsin-like activity. Plays a major role in the degradation of misfolded proteins. In Chlamydia muridarum (strain MoPn / Nigg), this protein is ATP-dependent Clp protease proteolytic subunit 1.